The sequence spans 461 residues: V-type ATP synthase beta chain (461 aa).

The protein belongs to the ATPase alpha/beta chains family.

In terms of biological role, produces ATP from ADP in the presence of a proton gradient across the membrane. The V-type beta chain is a regulatory subunit. The polypeptide is V-type ATP synthase beta chain (Streptococcus pneumoniae (strain CGSP14)).